We begin with the raw amino-acid sequence, 147 residues long: Endoribonuclease YbeY (147 aa).

Zn(2+) is bound by residues His-108, His-112, and His-118.

Belongs to the endoribonuclease YbeY family. The cofactor is Zn(2+).

It localises to the cytoplasm. Its function is as follows. Single strand-specific metallo-endoribonuclease involved in late-stage 70S ribosome quality control and in maturation of the 3' terminus of the 16S rRNA. The chain is Endoribonuclease YbeY from Sulfurovum sp. (strain NBC37-1).